An 81-amino-acid chain; its full sequence is CLAVATA3/ESR (CLE)-related protein 6 (81 aa).

Residues 1-26 (MANLILKQSLIILLIIYSTPILSSQA) form the signal peptide. Hydroxyproline occurs at positions 73 and 76. Pro-76 carries O-linked (Ara...) hydroxyproline glycosylation.

This sequence belongs to the CLV3/ESR signal peptide family. The O-glycosylation (arabinosylation) of the hydroxyproline Pro-76 enhances binding affinity of the CLE6p peptide for its receptor. In terms of tissue distribution, mostly expressed in roots, seedlings, stems and flowers, and, to a lower extent, in apex and siliques.

It is found in the secreted. It localises to the extracellular space. Functionally, extracellular signal peptide that regulates cell fate. This is CLAVATA3/ESR (CLE)-related protein 6 from Arabidopsis thaliana (Mouse-ear cress).